Reading from the N-terminus, the 415-residue chain is Serine/threonine transporter SstT (415 aa).

8 helical membrane-spanning segments follow: residues I23–A43, L47–V67, I85–F105, A144–L164, A181–V201, L220–F240, I293–L313, and V333–I353.

Belongs to the dicarboxylate/amino acid:cation symporter (DAACS) (TC 2.A.23) family.

Its subcellular location is the cell inner membrane. It carries out the reaction L-serine(in) + Na(+)(in) = L-serine(out) + Na(+)(out). The enzyme catalyses L-threonine(in) + Na(+)(in) = L-threonine(out) + Na(+)(out). Its function is as follows. Involved in the import of serine and threonine into the cell, with the concomitant import of sodium (symport system). The sequence is that of Serine/threonine transporter SstT from Klebsiella pneumoniae (strain 342).